Reading from the N-terminus, the 179-residue chain is RNA polymerase sigma-E factor (179 aa).

Residues 36–49 carry the Polymerase core binding motif; that stretch reads DLLQTALVRTYGRW. A DNA-binding region (H-T-H motif) is located at residues 130 to 149; it reads TEETAAALGMSAGTVKSTLH.

The protein belongs to the sigma-70 factor family. ECF subfamily.

The protein localises to the cytoplasm. Functionally, sigma factors are initiation factors that promote the attachment of RNA polymerase to specific initiation sites and are then released. This sigma factor is required for normal cell wall integrity; it is recruited by RNA polymerase to transcribe genes with cell wall-related functions. The sequence is that of RNA polymerase sigma-E factor (sigE) from Streptomyces avermitilis (strain ATCC 31267 / DSM 46492 / JCM 5070 / NBRC 14893 / NCIMB 12804 / NRRL 8165 / MA-4680).